Reading from the N-terminus, the 421-residue chain is Medium-chain specific acyl-CoA dehydrogenase, mitochondrial (421 aa).

A mitochondrion-targeting transit peptide spans 1 to 25; that stretch reads MAAAFGRCCRVLRSISRFHWRSQHT. Lys-69 carries the post-translational modification N6-acetyllysine; alternate. Lys-69 carries the N6-succinyllysine; alternate modification. FAD is bound at residue 158–167; that stretch reads YCVTEPGAGS. Ser-167 provides a ligand contact to octanoyl-CoA. The residue at position 179 (Lys-179) is an N6-succinyllysine. 191–193 contributes to the FAD binding site; that stretch reads WIT. Lys-212, Lys-217, Lys-259, and Lys-271 each carry N6-acetyllysine; alternate. Residues Lys-212, Lys-217, Lys-259, and Lys-271 each carry the N6-succinyllysine; alternate modification. Residue Asp-278 coordinates octanoyl-CoA. N6-acetyllysine is present on Lys-279. Arg-281 provides a ligand contact to octanoyl-CoA. N6-acetyllysine is present on Lys-301. Residues 306-308 and 316-317 contribute to the FAD site; these read RKT and HQ. Positions 349 and 351 each coordinate octanoyl-CoA. Thr-351 is subject to Phosphothreonine. Residue 374 to 378 coordinates FAD; it reads QIFGG. Glu-401 contributes to the octanoyl-CoA binding site. Catalysis depends on Glu-401, which acts as the Proton acceptor. 402–405 serves as a coordination point for FAD; the sequence is GTSQ.

This sequence belongs to the acyl-CoA dehydrogenase family. In terms of assembly, homotetramer. Interacts with the heterodimeric electron transfer flavoprotein ETF. Requires FAD as cofactor. Post-translationally, acetylated. Could occur at proximity of the cofactor-binding sites and reduce the catalytic activity. Could be deacetylated by SIRT3.

It is found in the mitochondrion matrix. It catalyses the reaction a medium-chain 2,3-saturated fatty acyl-CoA + oxidized [electron-transfer flavoprotein] + H(+) = a medium-chain (2E)-enoyl-CoA + reduced [electron-transfer flavoprotein]. The catalysed reaction is pentanoyl-CoA + oxidized [electron-transfer flavoprotein] + H(+) = (2E)-pentenoyl-CoA + reduced [electron-transfer flavoprotein]. The enzyme catalyses hexanoyl-CoA + oxidized [electron-transfer flavoprotein] + H(+) = (2E)-hexenoyl-CoA + reduced [electron-transfer flavoprotein]. It carries out the reaction octanoyl-CoA + oxidized [electron-transfer flavoprotein] + H(+) = (2E)-octenoyl-CoA + reduced [electron-transfer flavoprotein]. It catalyses the reaction decanoyl-CoA + oxidized [electron-transfer flavoprotein] + H(+) = (2E)-decenoyl-CoA + reduced [electron-transfer flavoprotein]. The catalysed reaction is dodecanoyl-CoA + oxidized [electron-transfer flavoprotein] + H(+) = (2E)-dodecenoyl-CoA + reduced [electron-transfer flavoprotein]. The enzyme catalyses tetradecanoyl-CoA + oxidized [electron-transfer flavoprotein] + H(+) = (2E)-tetradecenoyl-CoA + reduced [electron-transfer flavoprotein]. It carries out the reaction oxidized [electron-transfer flavoprotein] + hexadecanoyl-CoA + H(+) = (2E)-hexadecenoyl-CoA + reduced [electron-transfer flavoprotein]. Its pathway is lipid metabolism; mitochondrial fatty acid beta-oxidation. Functionally, medium-chain specific acyl-CoA dehydrogenase is one of the acyl-CoA dehydrogenases that catalyze the first step of mitochondrial fatty acid beta-oxidation, an aerobic process breaking down fatty acids into acetyl-CoA and allowing the production of energy from fats. The first step of fatty acid beta-oxidation consists in the removal of one hydrogen from C-2 and C-3 of the straight-chain fatty acyl-CoA thioester, resulting in the formation of trans-2-enoyl-CoA. Electron transfer flavoprotein (ETF) is the electron acceptor that transfers electrons to the main mitochondrial respiratory chain via ETF-ubiquinone oxidoreductase (ETF dehydrogenase). Among the different mitochondrial acyl-CoA dehydrogenases, medium-chain specific acyl-CoA dehydrogenase acts specifically on acyl-CoAs with saturated 6 to 12 carbons long primary chains. This chain is Medium-chain specific acyl-CoA dehydrogenase, mitochondrial, found in Macaca fascicularis (Crab-eating macaque).